The following is a 900-amino-acid chain: MRLFVSDGVPGCLPVLAAAGRARGRAEVLISTVGPEDCVVPFLTRPKVPVLQLDSGNYLFSTSAICRYFFLLSGWEQDDLTNQWLEWEATELQPALSAALYYLVVQGKKGEDVLGSVRRALTHIDHSLSRQNCPFLAGETESLADIVLWGALYPLLQDPAYLPEELSALHSWFQTLSTQEPCQRAAETVLKQQGVLALRPYLQKQPQPSPAEGRAVTNEPEEEELATLSEEEIAMAVTAWEKGLESLPPLRPQQNPVLPVAGERNVLITSALPYVNNVPHLGNIIGCVLSADVFARYSRLRQWNTLYLCGTDEYGTATETKALEEGLTPQEICDKYHIIHADIYRWFNISFDIFGRTTTPQQTKITQDIFQQLLKRGFVLQDTVEQLRCEHCARFLADRFVEGVCPFCGYEEARGDQCDKCGKLINAVELKKPQCKVCRSCPVVQSSQHLFLDLPKLEKRLEEWLGRTLPGSDWTPNAQFITRSWLRDGLKPRCITRDLKWGTPVPLEGFEDKVFYVWFDATIGYLSITANYTDQWERWWKNPEQVDLYQFMAKDNVPFHSLVFPCSALGAEDNYTLVSHLIATEYLNYEDGKFSKSRGVGVFGDMAQDTGIPADIWRFYLLYIRPEGQDSAFSWTDLLLKNNSELLNNLGNFINRAGMFVSKFFGGYVPEMVLTPDDQRLLAHVTLELQHYHQLLEKVRIRDALRSILTISRHGNQYIQVNEPWKRIKGSEADRQRAGTVTGLAVNIAALLSVMLQPYMPTVSATIQAQLQLPPPACSILLTNFLCTLPAGHQIGTVSPLFQKLENDQIESLRQRFGGGQAKTSPKPAVVETVTTAKPQQIQALMDEVTKQGNIVRELKAQKADKNEVAAEVAKLLDLKKQLAVAEGKPPEAPKGKKKK.

A GST C-terminal domain is found at 74-198; that stretch reads GWEQDDLTNQ…VLKQQGVLAL (125 aa). A 'HIGH' region motif is present at residues 273–283; sequence PYVNNVPHLGN. Positions 593 to 597 match the 'KMSKS' region motif; sequence KFSKS. K596 is a binding site for ATP. Phosphoserine is present on S825. T835 is modified (phosphothreonine). Positions 841 to 897 constitute a WHEP-TRS domain; that stretch reads QIQALMDEVTKQGNIVRELKAQKADKNEVAAEVAKLLDLKKQLAVAEGKPPEAPKGK.

It belongs to the class-I aminoacyl-tRNA synthetase family. Monomer. Part of a multisubunit complex that groups tRNA ligases for Arg (RARS1), Asp (DARS1), Gln (QARS1), Ile (IARS1), Leu (LARS1), Lys (KARS1), Met (MARS1) the bifunctional ligase for Glu and Pro (EPRS1) and the auxiliary subunits AIMP1/p43, AIMP2/p38 and EEF1E1/p18. Forms a linear complex that contains MARS1, EEF1E1, EPRS1 and AIMP2 that is at the core of the multisubunit complex.

It localises to the cytoplasm. It is found in the cytosol. The protein localises to the nucleus. Its subcellular location is the nucleolus. It carries out the reaction tRNA(Met) + L-methionine + ATP = L-methionyl-tRNA(Met) + AMP + diphosphate. With respect to regulation, enzyme activity is increased by spermidine, EEF1A1, and when the Mg(2+) concentration is increased from 5 mM to 13 mM (in vitro), possibly by promoting the dissociation of the complex between the enzyme and its product. In terms of biological role, catalyzes the specific attachment of an amino acid to its cognate tRNA in a 2 step reaction: the amino acid (AA) is first activated by ATP to form AA-AMP and then transferred to the acceptor end of the tRNA. Plays a role in the synthesis of ribosomal RNA in the nucleolus. In Homo sapiens (Human), this protein is Methionine--tRNA ligase, cytoplasmic.